Here is a 473-residue protein sequence, read N- to C-terminus: Serine/threonine-protein phosphatase 2A activator 1 (473 aa).

The disordered stretch occupies residues 360-473; sequence NAVPPPTSAH…HVPTKAPWAK (114 aa). Residues 368–378 are compositionally biased toward polar residues; sequence AHMSTTQSQSR. Residues 395-416 are compositionally biased toward low complexity; the sequence is APWATATQAAPPAGAGTAAPWA.

It belongs to the PTPA-type PPIase family.

Its subcellular location is the cytoplasm. The protein resides in the nucleus. It carries out the reaction [protein]-peptidylproline (omega=180) = [protein]-peptidylproline (omega=0). PPIases accelerate the folding of proteins. It catalyzes the cis-trans isomerization of proline imidic peptide bonds in oligopeptides. Acts as a regulatory subunit for PP2A-like phosphatases modulating their activity or substrate specificity, probably by inducing a conformational change in the catalytic subunit, a direct target of the PPIase. Can reactivate inactive phosphatase PP2A-phosphatase methylesterase complexes (PP2Ai) in presence of ATP and Mg(2+) by dissociating the inactive form from the complex. The protein is Serine/threonine-protein phosphatase 2A activator 1 (rrd1) of Aspergillus fumigatus (strain ATCC MYA-4609 / CBS 101355 / FGSC A1100 / Af293) (Neosartorya fumigata).